The chain runs to 235 residues: Peptidyl-tRNA hydrolase (235 aa).

Y14 contacts tRNA. H19 serves as the catalytic Proton acceptor. TRNA contacts are provided by F64, N66, and N112. Residues 186–235 are disordered; the sequence is RTAPPRSSGGSPKTDKPAKATREPPPAAKPEATPEEETRSPLQRLVDKFR. Residues 198–207 are compositionally biased toward basic and acidic residues; the sequence is KTDKPAKATR.

It belongs to the PTH family. As to quaternary structure, monomer.

It localises to the cytoplasm. It carries out the reaction an N-acyl-L-alpha-aminoacyl-tRNA + H2O = an N-acyl-L-amino acid + a tRNA + H(+). Its function is as follows. Hydrolyzes ribosome-free peptidyl-tRNAs (with 1 or more amino acids incorporated), which drop off the ribosome during protein synthesis, or as a result of ribosome stalling. In terms of biological role, catalyzes the release of premature peptidyl moieties from peptidyl-tRNA molecules trapped in stalled 50S ribosomal subunits, and thus maintains levels of free tRNAs and 50S ribosomes. This Dinoroseobacter shibae (strain DSM 16493 / NCIMB 14021 / DFL 12) protein is Peptidyl-tRNA hydrolase.